The chain runs to 939 residues: Nonsense-mediated mRNA decay factor SMG8 (939 aa).

Disordered stretches follow at residues 561–600 and 617–645; these read KICTPQGEDENEDGETEEADEDTEEKEQAEGDNCSQQLSP and LNESQESSEQLSGSEHESPNSGTSSADTE. Residues 567-587 show a composition bias toward acidic residues; sequence GEDENEDGETEEADEDTEEKE. Over residues 617–629 the composition is skewed to low complexity; that stretch reads LNESQESSEQLSG.

Belongs to the SMG8 family.

Functionally, involved in nonsense-mediated decay (NMD) of mRNAs containing premature stop codons. Probable component of kinase complex containing nonC and recruited to stalled ribosomes. This is Nonsense-mediated mRNA decay factor SMG8 from Drosophila ananassae (Fruit fly).